The primary structure comprises 442 residues: tRNA-2-methylthio-N(6)-dimethylallyladenosine synthase (442 aa).

The MTTase N-terminal domain maps to Lys5 to Lys122. [4Fe-4S] cluster-binding residues include Cys14, Cys51, Cys85, Cys159, Cys163, and Cys166. The Radical SAM core domain maps to Lys145–Ile378. A TRAM domain is found at Arg380–Ile442.

This sequence belongs to the methylthiotransferase family. MiaB subfamily. Monomer. The cofactor is [4Fe-4S] cluster.

The protein localises to the cytoplasm. The catalysed reaction is N(6)-dimethylallyladenosine(37) in tRNA + (sulfur carrier)-SH + AH2 + 2 S-adenosyl-L-methionine = 2-methylsulfanyl-N(6)-dimethylallyladenosine(37) in tRNA + (sulfur carrier)-H + 5'-deoxyadenosine + L-methionine + A + S-adenosyl-L-homocysteine + 2 H(+). Catalyzes the methylthiolation of N6-(dimethylallyl)adenosine (i(6)A), leading to the formation of 2-methylthio-N6-(dimethylallyl)adenosine (ms(2)i(6)A) at position 37 in tRNAs that read codons beginning with uridine. The protein is tRNA-2-methylthio-N(6)-dimethylallyladenosine synthase of Francisella tularensis subsp. holarctica (strain LVS).